The following is a 368-amino-acid chain: N-acetylneuraminate epimerase (368 aa).

Residues 1 to 19 (MNKTIMALAIMMASFAANA) form the signal peptide. 7 Kelch repeats span residues 40-84 (TVYI…AFID), 86-137 (NLYV…FVHN), 139-173 (KAYV…KINA), 174-219 (HYFD…VNKG), 222-265 (TWLI…VAGG), 287-336 (ENYQ…PWNN), and 338-367 (LLII…VTVQ). E228 (proton acceptor) is an active-site residue.

The protein belongs to the NanM family. Homodimer.

Its subcellular location is the periplasm. It carries out the reaction N-acetyl-alpha-neuraminate = N-acetyl-beta-neuraminate. In terms of biological role, converts alpha-N-acetylneuranimic acid (Neu5Ac) to the beta-anomer, accelerating the equilibrium between the alpha- and beta-anomers. Probably facilitates sialidase-negative bacteria to compete successfully for limited amounts of extracellular Neu5Ac, which is likely taken up in the beta-anomer. In addition, the rapid removal of sialic acid from solution might be advantageous to the bacterium to damp down host responses. The sequence is that of N-acetylneuraminate epimerase from Shigella flexneri serotype 5b (strain 8401).